We begin with the raw amino-acid sequence, 2259 residues long: Protein Ycf2 (2259 aa).

1556 to 1563 contacts ATP; the sequence is GSQETGRS.

It belongs to the Ycf2 family.

The protein resides in the plastid. It is found in the chloroplast stroma. Probable ATPase of unknown function. Its presence in a non-photosynthetic plant (Epifagus virginiana) and experiments in tobacco indicate that it has an essential function which is probably not related to photosynthesis. The chain is Protein Ycf2 from Physcomitrium patens (Spreading-leaved earth moss).